The following is a 455-amino-acid chain: Phosphoglucosamine mutase (455 aa).

The Phosphoserine intermediate role is filled by S106. Mg(2+)-binding residues include S106, D245, D247, and D249. Residue S106 is modified to Phosphoserine.

This sequence belongs to the phosphohexose mutase family. Mg(2+) serves as cofactor. In terms of processing, activated by phosphorylation.

The catalysed reaction is alpha-D-glucosamine 1-phosphate = D-glucosamine 6-phosphate. Its function is as follows. Catalyzes the conversion of glucosamine-6-phosphate to glucosamine-1-phosphate. This is Phosphoglucosamine mutase from Acaryochloris marina (strain MBIC 11017).